The sequence spans 377 residues: Nitric oxide reductase FlRd-NAD(+) reductase (377 aa).

Belongs to the FAD-dependent oxidoreductase family. It depends on FAD as a cofactor.

The protein resides in the cytoplasm. It carries out the reaction 2 reduced [nitric oxide reductase rubredoxin domain] + NAD(+) + H(+) = 2 oxidized [nitric oxide reductase rubredoxin domain] + NADH. The protein operates within nitrogen metabolism; nitric oxide reduction. One of at least two accessory proteins for anaerobic nitric oxide (NO) reductase. Reduces the rubredoxin moiety of NO reductase. The polypeptide is Nitric oxide reductase FlRd-NAD(+) reductase (Escherichia coli O127:H6 (strain E2348/69 / EPEC)).